The primary structure comprises 253 residues: Ribosome-inactivating protein saporin-5 (253 aa).

Residue glutamate 176 is part of the active site.

The protein belongs to the ribosome-inactivating protein family. Type 1 RIP subfamily.

The catalysed reaction is Endohydrolysis of the N-glycosidic bond at one specific adenosine on the 28S rRNA.. Ribosome-inactivating protein of type 1, inhibits protein synthesis in animal cells. The polypeptide is Ribosome-inactivating protein saporin-5 (SAP5) (Saponaria officinalis (Common soapwort)).